An 838-amino-acid polypeptide reads, in one-letter code: Probable inorganic carbon transporter subunit DabA (838 aa).

Residues cysteine 353, aspartate 355, histidine 537, and cysteine 552 each coordinate Zn(2+).

This sequence belongs to the inorganic carbon transporter (TC 9.A.2) DabA family. Forms a complex with DabB. Zn(2+) serves as cofactor.

The protein localises to the cell membrane. Its function is as follows. Part of an energy-coupled inorganic carbon pump. The sequence is that of Probable inorganic carbon transporter subunit DabA from Roseiflexus sp. (strain RS-1).